Reading from the N-terminus, the 251-residue chain is Regulator of G-protein signaling 7-binding protein B (251 aa).

A disordered region spans residues 1–43; that stretch reads MCSAPNGRKNRPRSAANIFQIGKSSVRDPERRESTESARRAQR. Residues 25–43 show a composition bias toward basic and acidic residues; that stretch reads SVRDPERRESTESARRAQR. 2 S-palmitoyl cysteine lipidation sites follow: C246 and C247.

Belongs to the RGS7BP/RGS9BP family. Palmitoylated. Undergoes rapid palmitoylation turnover. Palmitoylation regulates the cell membrane and nuclear shuttling and the regulation of GPCR signaling. Upon depalmitoylation, it is targeted from the plasma membrane into the nucleus. GPCR signaling inhibits depalmitoylation and promotes localization to the plasma membrane.

The protein resides in the nucleus. The protein localises to the cytoplasm. It localises to the cell membrane. Functionally, regulator of G protein-coupled receptor (GPCR) signaling. Regulatory subunit of the R7-Gbeta5 complexes that acts by controlling the subcellular location of the R7-Gbeta5 complexes. When palmitoylated, it targets the R7-Gbeta5 complexes to the plasma membrane, leading to inhibit G protein alpha subunits. When it is unpalmitoylated, the R7-Gbeta5 complexes undergo a nuclear/cytoplasmic shuttling. This chain is Regulator of G-protein signaling 7-binding protein B (rgs7bpb), found in Danio rerio (Zebrafish).